Here is a 241-residue protein sequence, read N- to C-terminus: tRNA pseudouridine synthase A (241 aa).

The active-site Nucleophile is Asp-52. Substrate is bound at residue Tyr-110.

It belongs to the tRNA pseudouridine synthase TruA family. In terms of assembly, homodimer.

The enzyme catalyses uridine(38/39/40) in tRNA = pseudouridine(38/39/40) in tRNA. Functionally, formation of pseudouridine at positions 38, 39 and 40 in the anticodon stem and loop of transfer RNAs. This Aquifex aeolicus (strain VF5) protein is tRNA pseudouridine synthase A.